A 325-amino-acid polypeptide reads, in one-letter code: Beta-ketoacyl-[acyl-carrier-protein] synthase III (325 aa).

Active-site residues include Cys112 and His250. Residues 251–255 (QANSR) form an ACP-binding region. The active site involves Asn280.

The protein belongs to the thiolase-like superfamily. FabH family. As to quaternary structure, homodimer.

The protein resides in the cytoplasm. The enzyme catalyses malonyl-[ACP] + acetyl-CoA + H(+) = 3-oxobutanoyl-[ACP] + CO2 + CoA. Its pathway is lipid metabolism; fatty acid biosynthesis. Catalyzes the condensation reaction of fatty acid synthesis by the addition to an acyl acceptor of two carbons from malonyl-ACP. Catalyzes the first condensation reaction which initiates fatty acid synthesis and may therefore play a role in governing the total rate of fatty acid production. Possesses both acetoacetyl-ACP synthase and acetyl transacylase activities. Its substrate specificity determines the biosynthesis of branched-chain and/or straight-chain of fatty acids. This chain is Beta-ketoacyl-[acyl-carrier-protein] synthase III, found in Lactococcus lactis subsp. cremoris (strain MG1363).